The chain runs to 217 residues: Probable GTP-binding protein EngB (217 aa).

The EngB-type G domain maps to 37–214 (SGLEVAFAGR…RAAMARLIGD (178 aa)). GTP contacts are provided by residues 45–52 (GRSNVGKS), 72–76 (GRTQE), 92–95 (DMPG), 159–162 (TKAD), and 193–195 (TSS). Mg(2+) contacts are provided by S52 and T74.

The protein belongs to the TRAFAC class TrmE-Era-EngA-EngB-Septin-like GTPase superfamily. EngB GTPase family. The cofactor is Mg(2+).

Its function is as follows. Necessary for normal cell division and for the maintenance of normal septation. This chain is Probable GTP-binding protein EngB, found in Nitrobacter winogradskyi (strain ATCC 25391 / DSM 10237 / CIP 104748 / NCIMB 11846 / Nb-255).